Consider the following 778-residue polypeptide: IQ domain-containing protein E (778 aa).

Disordered stretches follow at residues 1 to 71 (MSLG…LSSR) and 83 to 108 (SSKQ…HPPS). A compositionally biased stretch (low complexity) spans 37-49 (KPPSTSPKSPYYS). Residues 83–101 (SSKQGSVAQPPSPTLTSEH) are compositionally biased toward polar residues. A coiled-coil region spans residues 157–323 (LHMQKSDVDL…DLDRMLSNSP (167 aa)). Ser-322 carries the post-translational modification Phosphoserine. Disordered stretches follow at residues 348 to 392 (KKVS…EDLP), 443 to 462 (ETAR…LREE), 474 to 529 (EEAK…SEER), and 573 to 612 (LVRS…AEEN). The span at 352 to 362 (SSESPKQSTSE) shows a compositional bias: low complexity. Positions 398–486 (EEQEHLQGTV…KREEKNSFVA (89 aa)) form a coiled coil. IQ domains are found at residues 553–582 (LDEA…PDSR) and 615–644 (QEEA…REIA). The segment covering 581 to 598 (SRSPSLPGLLSPLNQSSP) has biased composition (low complexity). The span at 651-662 (TVSLTPSGSASP) shows a compositional bias: polar residues. A disordered region spans residues 651-778 (TVSLTPSGSA…LPRKKSPSPF (128 aa)). At Ser-661 the chain carries Phosphoserine. Positions 672–686 (IRKELCASEELRETS) are enriched in basic and acidic residues. Over residues 739–752 (PSPPELQPLSPPPV) the composition is skewed to pro residues.

As to quaternary structure, component of the EvC complex composed of EFCAB7, IQCE, EVC2 and EVC; built from two subcomplexes, EVC2:EVC and EFCAB7:IQCE. Interacts (via N-terminus) with EFCAB7 (via EF-hands 1 and 2); this interaction anchors the EVC-EVC2 complex in a signaling microdomain at the base of cilia and stimulates the Hedgehog (Hh) pathway. Interacts with EVC2 (via N-terminal end). Interacts with EVC.

It localises to the cell projection. Its subcellular location is the cilium membrane. In terms of biological role, component of the EvC complex that positively regulates ciliary Hedgehog (Hh) signaling. Required for proper limb morphogenesis. The sequence is that of IQ domain-containing protein E (Iqce) from Mus musculus (Mouse).